Reading from the N-terminus, the 361-residue chain is Phospho-N-acetylmuramoyl-pentapeptide-transferase (361 aa).

Transmembrane regions (helical) follow at residues 25–45 (RAVL…PWVI), 73–93 (TMGG…WADL), 97–117 (YVWL…YDDW), 134–154 (MFWQ…TASL), 168–188 (VIYP…IVGT), 200–220 (GLAA…AYVA), 240–260 (VAVF…FNAY), 264–284 (VFMG…VAVI), 289–309 (IVLF…MIQV), and 338–358 (QVVV…LSTL).

It belongs to the glycosyltransferase 4 family. MraY subfamily. Mg(2+) serves as cofactor.

It localises to the cell inner membrane. It carries out the reaction UDP-N-acetyl-alpha-D-muramoyl-L-alanyl-gamma-D-glutamyl-meso-2,6-diaminopimeloyl-D-alanyl-D-alanine + di-trans,octa-cis-undecaprenyl phosphate = di-trans,octa-cis-undecaprenyl diphospho-N-acetyl-alpha-D-muramoyl-L-alanyl-D-glutamyl-meso-2,6-diaminopimeloyl-D-alanyl-D-alanine + UMP. Its pathway is cell wall biogenesis; peptidoglycan biosynthesis. Catalyzes the initial step of the lipid cycle reactions in the biosynthesis of the cell wall peptidoglycan: transfers peptidoglycan precursor phospho-MurNAc-pentapeptide from UDP-MurNAc-pentapeptide onto the lipid carrier undecaprenyl phosphate, yielding undecaprenyl-pyrophosphoryl-MurNAc-pentapeptide, known as lipid I. This Laribacter hongkongensis (strain HLHK9) protein is Phospho-N-acetylmuramoyl-pentapeptide-transferase.